An 87-amino-acid chain; its full sequence is Chromosomal protein MC1b (87 aa).

Protects DNA against thermal denaturation and modulates transcription. The sequence is that of Chromosomal protein MC1b from Methanothrix soehngenii (Methanosaeta concilii).